Reading from the N-terminus, the 162-residue chain is MGRMKDRNASAGPEVKPAGLSPSRFVKVFMHGEPFERKINLAIHNNYDSLSFTLKRLGNNYSMSPFELEGFVNNEEDGAIDNDFDLLYDDMNGVRYLLGEVPWEVFTITVKRIYIVPAEQQNESEYQEEEEDNAAAAATADEDVDGNHWWRNHLWSVGPILQ.

Residues 23–118 (SRFVKVFMHG…TVKRIYIVPA (96 aa)) enclose the PB1 domain. Residues 122 to 141 (NESEYQEEEEDNAAAAATAD) are disordered.

It belongs to the Aux/IAA family. In terms of assembly, homodimers and heterodimers.

It is found in the nucleus. Functionally, aux/IAA proteins are short-lived transcriptional factors that function as repressors of early auxin response genes at low auxin concentrations. The chain is Putative auxin-responsive protein IAA28 (IAA28) from Oryza sativa subsp. japonica (Rice).